Consider the following 309-residue polypeptide: MTATDELTQNAGRYELSHLRALEAEAIHIIREVAAEFERPVLLFSGGKDSIVMLHLAIKAFRPGRLPFPVMHVDTGHNFEEVLAARDELVAESGVRLVVAKVQDDIDAGRVVETIPSRNPMQTFTLLRAIRENKFDAAFGGARRDEEKARAKERVFSFRDEFGQWDPKNQRPELWNLYNGRHRKGEHIRAFPLSNWTEFDIWSYIGAEKIKLPSIYYAHQRKVFERDGMLLAVHKHLQPRKDEPIIEKSVRFRTVGDVTCTGCVESTAATVSEVIAETAISRLTERGATRADDRISEAGMEDRKREGYF.

The protein belongs to the PAPS reductase family. CysD subfamily. As to quaternary structure, heterodimer composed of CysD, the smaller subunit, and CysN.

It catalyses the reaction sulfate + ATP + H(+) = adenosine 5'-phosphosulfate + diphosphate. It participates in sulfur metabolism; hydrogen sulfide biosynthesis; sulfite from sulfate: step 1/3. In terms of biological role, with CysN forms the ATP sulfurylase (ATPS) that catalyzes the adenylation of sulfate producing adenosine 5'-phosphosulfate (APS) and diphosphate, the first enzymatic step in sulfur assimilation pathway. APS synthesis involves the formation of a high-energy phosphoric-sulfuric acid anhydride bond driven by GTP hydrolysis by CysN coupled to ATP hydrolysis by CysD. The chain is Sulfate adenylyltransferase subunit 2 from Mycolicibacterium vanbaalenii (strain DSM 7251 / JCM 13017 / BCRC 16820 / KCTC 9966 / NRRL B-24157 / PYR-1) (Mycobacterium vanbaalenii).